The following is a 139-amino-acid chain: D-ribose pyranase (139 aa).

His-20 functions as the Proton donor in the catalytic mechanism. Residues Asp-28, His-106, and 128 to 130 (YAN) each bind substrate.

It belongs to the RbsD / FucU family. RbsD subfamily. As to quaternary structure, homodecamer.

The protein resides in the cytoplasm. It catalyses the reaction beta-D-ribopyranose = beta-D-ribofuranose. It participates in carbohydrate metabolism; D-ribose degradation; D-ribose 5-phosphate from beta-D-ribopyranose: step 1/2. Functionally, catalyzes the interconversion of beta-pyran and beta-furan forms of D-ribose. This chain is D-ribose pyranase, found in Pasteurella multocida (strain Pm70).